The sequence spans 126 residues: MIKEIHTHKSPKPIGPYSQAIQIKNFTFLSGQISQTDNINTNISFQTQSILQNINYILESKEMNVGNIVKTTIFITNLNDLTIVNDVYQKFFLKYTKTFPARSCVEVSKLPKNAKIEIDAIAYKNK.

Belongs to the RutC family.

This chain is RutC family protein bbp_334, found in Buchnera aphidicola subsp. Baizongia pistaciae (strain Bp).